Consider the following 355-residue polypeptide: Cytoplasmic tRNA 2-thiolation protein 1 (355 aa).

A disordered region spans residues 320 to 341; sequence GIGRPRGVNGDHNKETKKPGSV. Over residues 328 to 337 the composition is skewed to basic and acidic residues; sequence NGDHNKETKK.

It belongs to the TtcA family. CTU1/NCS6/ATPBD3 subfamily.

The protein localises to the cytoplasm. It participates in tRNA modification; 5-methoxycarbonylmethyl-2-thiouridine-tRNA biosynthesis. Plays a central role in 2-thiolation of mcm(5)S(2)U at tRNA wobble positions of tRNA(Lys), tRNA(Glu) and tRNA(Gln). Directly binds tRNAs and probably acts by catalyzing adenylation of tRNAs, an intermediate required for 2-thiolation. It is unclear whether it acts as a sulfurtransferase that transfers sulfur from thiocarboxylated URM1 onto the uridine of tRNAs at wobble position. The polypeptide is Cytoplasmic tRNA 2-thiolation protein 1 (Arabidopsis thaliana (Mouse-ear cress)).